Here is a 375-residue protein sequence, read N- to C-terminus: Alcohol dehydrogenase 1 (375 aa).

Position 1 is an N-acetylserine (S1). 7 residues coordinate Zn(2+): C46, H67, C97, C100, C103, C111, and C175. NAD(+) is bound by residues 200-205, D224, K229, 293-295, and R370; these read GLGGVG and VGV.

The protein belongs to the zinc-containing alcohol dehydrogenase family. Class-I subfamily. As to quaternary structure, homodimer. Requires Zn(2+) as cofactor.

The protein localises to the cytoplasm. It catalyses the reaction a primary alcohol + NAD(+) = an aldehyde + NADH + H(+). It carries out the reaction a secondary alcohol + NAD(+) = a ketone + NADH + H(+). In Coturnix japonica (Japanese quail), this protein is Alcohol dehydrogenase 1 (ADH1).